A 263-amino-acid chain; its full sequence is Acyl-[acyl-carrier-protein]--UDP-N-acetylglucosamine O-acyltransferase (263 aa).

It belongs to the transferase hexapeptide repeat family. LpxA subfamily. Homotrimer.

The protein localises to the cytoplasm. It catalyses the reaction a (3R)-hydroxyacyl-[ACP] + UDP-N-acetyl-alpha-D-glucosamine = a UDP-3-O-[(3R)-3-hydroxyacyl]-N-acetyl-alpha-D-glucosamine + holo-[ACP]. It participates in glycolipid biosynthesis; lipid IV(A) biosynthesis; lipid IV(A) from (3R)-3-hydroxytetradecanoyl-[acyl-carrier-protein] and UDP-N-acetyl-alpha-D-glucosamine: step 1/6. Its function is as follows. Involved in the biosynthesis of lipid A, a phosphorylated glycolipid that anchors the lipopolysaccharide to the outer membrane of the cell. This is Acyl-[acyl-carrier-protein]--UDP-N-acetylglucosamine O-acyltransferase from Xanthomonas oryzae pv. oryzae (strain PXO99A).